The following is a 199-amino-acid chain: Peptidyl-prolyl cis-trans isomerase CYP22 (199 aa).

Positions 35–198 constitute a PPIase cyclophilin-type domain; it reads FFDVSIGGIP…LAVVITECGE (164 aa).

The protein belongs to the cyclophilin-type PPIase family. As to expression, ubiquitous.

It carries out the reaction [protein]-peptidylproline (omega=180) = [protein]-peptidylproline (omega=0). In terms of biological role, PPIases accelerate the folding of proteins. It catalyzes the cis-trans isomerization of proline imidic peptide bonds in oligopeptides. The chain is Peptidyl-prolyl cis-trans isomerase CYP22 (CYP22) from Arabidopsis thaliana (Mouse-ear cress).